The sequence spans 83 residues: Small ribosomal subunit protein uS17 (83 aa).

This sequence belongs to the universal ribosomal protein uS17 family. As to quaternary structure, part of the 30S ribosomal subunit.

In terms of biological role, one of the primary rRNA binding proteins, it binds specifically to the 5'-end of 16S ribosomal RNA. The chain is Small ribosomal subunit protein uS17 from Acaryochloris marina (strain MBIC 11017).